A 505-amino-acid polypeptide reads, in one-letter code: Maturase K (505 aa).

The protein belongs to the intron maturase 2 family. MatK subfamily.

Its subcellular location is the plastid. The protein resides in the chloroplast. Its function is as follows. Usually encoded in the trnK tRNA gene intron. Probably assists in splicing its own and other chloroplast group II introns. The polypeptide is Maturase K (Nuphar advena (Common spatterdock)).